Reading from the N-terminus, the 289-residue chain is Glyoxylate/succinic semialdehyde reductase 1 (289 aa).

The residue at position 1 (M1) is an N-acetylmethionine. NADP(+)-binding positions include 4–18 (GFLGLGIMGKAMSMN) and T95. K170 is a catalytic residue. K238 lines the NADP(+) pocket.

It belongs to the HIBADH-related family. NP60 subfamily.

It localises to the cytoplasm. The protein resides in the cytosol. The catalysed reaction is glycolate + NADP(+) = glyoxylate + NADPH + H(+). It catalyses the reaction 4-hydroxybutanoate + NADP(+) = succinate semialdehyde + NADPH + H(+). Its activity is regulated as follows. The ratio of NADPH/NADP(+) may regulate enzymatic activity. In terms of biological role, catalyzes the NADPH-dependent reduction of glyoxylate to glycolate as well as succinic semialdehyde (SSA) to gamma-hydroxybutyrate in vitro. May function in redox homeostasis and play a role in oxidative stress tolerance by detoxifying glyoxylate and SSA generated in glycolate metabolism and GABA metabolism, respectively. The polypeptide is Glyoxylate/succinic semialdehyde reductase 1 (GLYR1) (Arabidopsis thaliana (Mouse-ear cress)).